The chain runs to 164 residues: MVNSVVFFDITVDGKPLGRISIKLFADKIPKTAENFRALSTGEKGFRYKGSCFHRIIPGFMCQGGDFTRPNGTDDKSIYGEKFDDENLIRKHTGSGILSMVNAGPNTNGSQLFICTAKTEWLDGKHVAFGKVKERVNIVEAMEHFGYRNSKTSKKITIADCGQF.

One can recognise a PPIase cyclophilin-type domain in the interval 7–163; that stretch reads FFDITVDGKP…KKITIADCGQ (157 aa). N-linked (GlcNAc...) asparagine glycosylation is found at asparagine 71 and asparagine 108.

This sequence belongs to the cyclophilin-type PPIase family. PPIase A subfamily.

Its subcellular location is the cytoplasm. The catalysed reaction is [protein]-peptidylproline (omega=180) = [protein]-peptidylproline (omega=0). In terms of biological role, PPIases accelerate the folding of proteins. It catalyzes the cis-trans isomerization of proline imidic peptide bonds in oligopeptides. This Homo sapiens (Human) protein is Peptidyl-prolyl cis-trans isomerase A-like 4H.